A 275-amino-acid chain; its full sequence is Dermonecrotic toxin LarSicTox-alphaIII1 (275 aa).

Histidine 5 is a catalytic residue. 2 residues coordinate Mg(2+): glutamate 25 and aspartate 27. Histidine 41 functions as the Nucleophile in the catalytic mechanism. 2 disulfide bridges follow: cysteine 45-cysteine 51 and cysteine 47-cysteine 190. Aspartate 85 contributes to the Mg(2+) binding site. An N-linked (GlcNAc...) asparagine glycan is attached at asparagine 252.

It belongs to the arthropod phospholipase D family. Class II subfamily. Mg(2+) serves as cofactor. In terms of tissue distribution, expressed by the venom gland.

The protein resides in the secreted. The enzyme catalyses an N-(acyl)-sphingosylphosphocholine = an N-(acyl)-sphingosyl-1,3-cyclic phosphate + choline. The catalysed reaction is an N-(acyl)-sphingosylphosphoethanolamine = an N-(acyl)-sphingosyl-1,3-cyclic phosphate + ethanolamine. It carries out the reaction a 1-acyl-sn-glycero-3-phosphocholine = a 1-acyl-sn-glycero-2,3-cyclic phosphate + choline. It catalyses the reaction a 1-acyl-sn-glycero-3-phosphoethanolamine = a 1-acyl-sn-glycero-2,3-cyclic phosphate + ethanolamine. Its function is as follows. Dermonecrotic toxins cleave the phosphodiester linkage between the phosphate and headgroup of certain phospholipids (sphingolipid and lysolipid substrates), forming an alcohol (often choline) and a cyclic phosphate. This toxin acts on sphingomyelin (SM). It may also act on ceramide phosphoethanolamine (CPE), lysophosphatidylcholine (LPC) and lysophosphatidylethanolamine (LPE), but not on lysophosphatidylserine (LPS), and lysophosphatidylglycerol (LPG). It acts by transphosphatidylation, releasing exclusively cyclic phosphate products as second products. Induces dermonecrosis, hemolysis, increased vascular permeability, edema, inflammatory response, and platelet aggregation. The sequence is that of Dermonecrotic toxin LarSicTox-alphaIII1 from Loxosceles arizonica (Arizona brown spider).